Consider the following 201-residue polypeptide: Diadenylate cyclase CdaS (201 aa).

A DAC domain is found at Gln54 to Leu201.

It belongs to the adenylate cyclase family. DacB/CdaS subfamily. Probably forms a homohexamer. The cofactor is Mg(2+).

The enzyme catalyses 2 ATP = 3',3'-c-di-AMP + 2 diphosphate. In terms of biological role, one of 3 paralogous diadenylate cyclases (DAC) in this bacteria catalyzing the condensation of 2 ATP molecules into cyclic di-AMP (c-di-AMP). It has slow DAC activity with ADP as a substrate and may have weak ADPase activity. Required for efficient spore formation, whereas in B.subtilis, it is required for efficient spore germination. It is produced under the control of different sigma factors in the two bacteria. It is also required for parasporal crystal formation. The chain is Diadenylate cyclase CdaS from Bacillus thuringiensis (strain BMB171).